The chain runs to 391 residues: DNA primase small subunit PriS (391 aa).

Catalysis depends on residues aspartate 98, aspartate 100, and aspartate 294.

Belongs to the eukaryotic-type primase small subunit family. Heterodimer of a small subunit (PriS) and a large subunit (PriL). Mg(2+) serves as cofactor. It depends on Mn(2+) as a cofactor.

Catalytic subunit of DNA primase, an RNA polymerase that catalyzes the synthesis of short RNA molecules used as primers for DNA polymerase during DNA replication. The small subunit contains the primase catalytic core and has DNA synthesis activity on its own. Binding to the large subunit stabilizes and modulates the activity, increasing the rate of DNA synthesis while decreasing the length of the DNA fragments, and conferring RNA synthesis capability. The DNA polymerase activity may enable DNA primase to also catalyze primer extension after primer synthesis. May also play a role in DNA repair. The chain is DNA primase small subunit PriS from Halobacterium salinarum (strain ATCC 29341 / DSM 671 / R1).